A 173-amino-acid chain; its full sequence is Endoribonuclease YbeY (173 aa).

His126, His130, and His136 together coordinate Zn(2+).

This sequence belongs to the endoribonuclease YbeY family. It depends on Zn(2+) as a cofactor.

It localises to the cytoplasm. Functionally, single strand-specific metallo-endoribonuclease involved in late-stage 70S ribosome quality control and in maturation of the 3' terminus of the 16S rRNA. The sequence is that of Endoribonuclease YbeY from Sinorhizobium fredii (strain NBRC 101917 / NGR234).